The following is a 423-amino-acid chain: F-box/LRR-repeat protein 2 (423 aa).

An F-box domain is found at 9–55 (GRINKKLPKELLLRIFSFLDIVTLCRCAQISKAWNILALDGSNWQRI). LRR repeat units lie at residues 61-87 (QTDVEGRVVENISKRCGGFLRKLSLRG), 88-113 (CIGVGDSSLKTFAQNCRNIEHLNLNG), 114-139 (CTKITDSTCYSLSRFCSKLKHLDLTS), 140-165 (CVSITNSSLKGISEGCRNLEYLNLSW), 166-191 (CDQITKDGIEALVRGCRGLKALLLRG), 192-217 (CTQLEDEALKHIQNYCHELVSLNLQS), 218-243 (CSRITDEGVVQICRGCHRLQALCLSG), 244-269 (CSNLTDASLTALGLNCPRLQILEAAR), 270-295 (CSHLTDAGFTLLARNCHELEKMDLEE), 296-321 (CILITDSTLIQLSIHCPKLQALSLSH), 322-350 (CELITDDGILHLSNSTCGHERLRVLELDN), 351-375 (CLLITDVALEHLENCRGLERLELYD), and 376-401 (CQQVTRAGIKRMRAQLPHVKVHAYFA). The interval 80 to 90 (LRKLSLRGCIG) is interaction with Calmodulin. Residue lysine 201 forms a Glycyl lysine isopeptide (Lys-Gly) (interchain with G-Cter in ubiquitin) linkage. Threonine 404 is modified (phosphothreonine). A lipid anchor (S-geranylgeranyl cysteine) is attached at cysteine 420. The short motif at 420–423 (CVIL) is the CAAX motif element.

As to quaternary structure, part of the SCF (SKP1-CUL1-F-box) E3 ubiquitin-protein ligase complex SCF(FBXL2) composed of CUL1, SKP1, RBX1 and FBXL2. Interacts with calmodulin; may antagonize substrate ubiquitination by SCF(FBXL2). May interact with PIK3R1. Interacts with PTPN13. Phosphorylated by GSK-beta (GSK3B), promoting recognition by FBXO3, leading to its ubiquitination by the SCF(FBXO3) complex. Post-translationally, ubiquitinated at Lys-201 by the SCF(FBXO3) complex in response to lipopolysaccharide (LPS), leading to its degradation by the proteasome.

Its subcellular location is the membrane. It functions in the pathway protein modification; protein ubiquitination. Functionally, calcium-activated substrate recognition component of the SCF (SKP1-cullin-F-box protein) E3 ubiquitin-protein ligase complex, SCF(FBXL2), which mediates the ubiquitination and subsequent proteasomal degradation of target proteins. Unlike many F-box proteins, FBXL2 does not seem to target phosphodegron within its substrates but rather calmodulin-binding motifs and is thereby antagonized by calmodulin. This is the case for the cyclins CCND2 and CCND3 which polyubiquitination and subsequent degradation are inhibited by calmodulin. Through CCND2 and CCND3 degradation induces cell-cycle arrest in G(0). SCF(FBXL2) also mediates PIK3R2 ubiquitination and proteasomal degradation thereby regulating phosphatidylinositol 3-kinase signaling and autophagy. PCYT1A monoubiquitination by SCF(FBXL2) and subsequent degradation regulates synthesis of phosphatidylcholine, which is utilized for formation of membranes and of pulmonary surfactant. The SCF(FBXL2) complex acts as a regulator of inflammation by mediating ubiquitination and degradation of TRAF proteins (TRAF1, TRAF2, TRAF3, TRAF4, TRAF5 and TRAF6). The SCF(FBXL2) complex acts as a negative regulator of the NLRP3 inflammasome by mediating ubiquitination and degradation of NLRP3. This Pongo abelii (Sumatran orangutan) protein is F-box/LRR-repeat protein 2.